Reading from the N-terminus, the 205-residue chain is Holliday junction branch migration complex subunit RuvA (205 aa).

Positions 1–62 (MFEYVTGYVE…EDIMALYGFK (62 aa)) are domain I. The tract at residues 63–141 (TREERLLFTK…DVVPDAFVDL (79 aa)) is domain II. Positions 142–152 (FSDTERFDEKK) are flexible linker. Residues 153 to 205 (GSSAELDEALEALRALGYAEREVSRVVPELLKESLTTDQYIKKALSLLLNGKR) form a domain III region.

This sequence belongs to the RuvA family. Homotetramer. Forms an RuvA(8)-RuvB(12)-Holliday junction (HJ) complex. HJ DNA is sandwiched between 2 RuvA tetramers; dsDNA enters through RuvA and exits via RuvB. An RuvB hexamer assembles on each DNA strand where it exits the tetramer. Each RuvB hexamer is contacted by two RuvA subunits (via domain III) on 2 adjacent RuvB subunits; this complex drives branch migration. In the full resolvosome a probable DNA-RuvA(4)-RuvB(12)-RuvC(2) complex forms which resolves the HJ.

Its subcellular location is the cytoplasm. The RuvA-RuvB-RuvC complex processes Holliday junction (HJ) DNA during genetic recombination and DNA repair, while the RuvA-RuvB complex plays an important role in the rescue of blocked DNA replication forks via replication fork reversal (RFR). RuvA specifically binds to HJ cruciform DNA, conferring on it an open structure. The RuvB hexamer acts as an ATP-dependent pump, pulling dsDNA into and through the RuvAB complex. HJ branch migration allows RuvC to scan DNA until it finds its consensus sequence, where it cleaves and resolves the cruciform DNA. This Bacillus cereus (strain ATCC 14579 / DSM 31 / CCUG 7414 / JCM 2152 / NBRC 15305 / NCIMB 9373 / NCTC 2599 / NRRL B-3711) protein is Holliday junction branch migration complex subunit RuvA.